A 369-amino-acid polypeptide reads, in one-letter code: Glycerol-3-phosphate dehydrogenase [NAD(P)+] (369 aa).

NADPH contacts are provided by S6, W7, R27, R28, and K101. 2 residues coordinate sn-glycerol 3-phosphate: K101 and G131. A135 lines the NADPH pocket. Residues K186, D239, S249, R250, and N251 each coordinate sn-glycerol 3-phosphate. The active-site Proton acceptor is K186. R250 lines the NADPH pocket. E276 provides a ligand contact to NADPH. The segment at 312 to 369 (KDIAPHLTTDDEPQGERTRGERTTDDGQGQGRTSVWGSLKRAFDQLRDGGGSSRRDRP) is disordered. 2 stretches are compositionally biased toward basic and acidic residues: residues 325 to 336 (QGERTRGERTTD) and 352 to 369 (RAFD…RDRP).

This sequence belongs to the NAD-dependent glycerol-3-phosphate dehydrogenase family.

The protein localises to the cytoplasm. The enzyme catalyses sn-glycerol 3-phosphate + NAD(+) = dihydroxyacetone phosphate + NADH + H(+). It catalyses the reaction sn-glycerol 3-phosphate + NADP(+) = dihydroxyacetone phosphate + NADPH + H(+). It participates in membrane lipid metabolism; glycerophospholipid metabolism. Catalyzes the reduction of the glycolytic intermediate dihydroxyacetone phosphate (DHAP) to sn-glycerol 3-phosphate (G3P), the key precursor for phospholipid synthesis. The polypeptide is Glycerol-3-phosphate dehydrogenase [NAD(P)+] (Leifsonia xyli subsp. xyli (strain CTCB07)).